The chain runs to 189 residues: METSAPRAGSQVVATTARHSAAYRADPLRVSSRDKLTEMAASSQGNFEGNFESLDLAEFAKKQPWWRKLFGQESGPSAEKYSVATQLFIGGVTGWCTGFIFQKVGKLAATAVGGGFFLLQLANHTGYIKVDWQRVEKDMKKAKEQLKIRKSNQIPTEVRSKAEEVVSFVKKNVLVTGGFFGGFLLGMAS.

Residues 1–80 (METSAPRAGS…GQESGPSAEK (80 aa)) are Cytoplasmic-facing. 2 positions are modified to phosphoserine: serine 10 and serine 53. Residues 81 to 101 (YSVATQLFIGGVTGWCTGFIF) traverse the membrane as a helical segment. The Mitochondrial intermembrane portion of the chain corresponds to 102–107 (QKVGKL). Residues 108-128 (AATAVGGGFFLLQLANHTGYI) form a helical membrane-spanning segment. Over 129 to 164 (KVDWQRVEKDMKKAKEQLKIRKSNQIPTEVRSKAEE) the chain is Cytoplasmic. Residue serine 151 is modified to Phosphoserine. Residues 165 to 185 (VVSFVKKNVLVTGGFFGGFLL) traverse the membrane as a helical segment. At 186-189 (GMAS) the chain is on the mitochondrial intermembrane side.

The protein belongs to the FUN14 family. In terms of tissue distribution, highly expressed in platelets (at protein level).

Its subcellular location is the mitochondrion outer membrane. The protein localises to the nucleus. Functionally, binds directly and specifically 1,2-Diacyl-sn-glycero-3-phospho-(1'-myo-inositol-3',4',5'-bisphosphate) (PIP3) leading to the recruitment of PIP3 to mitochondria and may play a role in the regulation of the platelet activation via AKT/GSK3B/cGMP signaling pathways. May act as transcription factor that regulates SREBP1 (isoform SREBP-1C) expression in order to modulate triglyceride (TG) homeostasis in hepatocytes. The polypeptide is FUN14 domain-containing protein 2 (Homo sapiens (Human)).